The chain runs to 2177 residues: Mediator of RNA polymerase II transcription subunit 12 (2177 aa).

The interval 12-35 (RPLKRPRLGPPDVYPQDPKQKEDE) is disordered. The residue at position 80 (Lys-80) is an N6-acetyllysine. A Phosphotyrosine modification is found at Tyr-166. Disordered regions lie at residues 323-344 (QSTS…TPST), 627-669 (GAPG…MDID), 690-717 (TMPC…PKEK), and 1241-1266 (TVTG…QGGR). 4 positions are modified to phosphoserine: Ser-635, Ser-665, Ser-698, and Ser-700. Basic and acidic residues predominate over residues 702-717 (EKPDVEKEVKPPPKEK). 2 positions are modified to phosphoserine: Ser-1258 and Ser-1269. Residues 1394–1411 (AETGSSSGSTASNMPSSS) show a composition bias toward low complexity. Disordered stretches follow at residues 1394-1415 (AETG…KTKP), 1450-1474 (ELEK…KSMS), and 1738-1829 (YLEP…PGSI). Basic and acidic residues-rich tracts occupy residues 1450–1469 (ELEK…DRQK) and 1758–1771 (EPEK…KTDK). The interval 1616-2051 (LAKKLQKELG…VRSTAILPEQ (436 aa)) is interaction with CTNNB1 and GLI3. Basic residues predominate over residues 1784 to 1793 (KKSTKGKKRS). Lys-1798 bears the N6-acetyllysine mark. Residue Arg-1899 is modified to Asymmetric dimethylarginine; alternate. Arg-1899 is modified (omega-N-methylarginine; alternate). The residue at position 1910 (Arg-1910) is an Omega-N-methylarginine. Disordered regions lie at residues 1919 to 1938 (QGML…SYGL) and 1967 to 1989 (SYSS…DPTR). Polar residues predominate over residues 1927–1938 (VHQMTPSSSYGL). A compositionally biased stretch (low complexity) spans 1967–1980 (SYSSQPYQSTHPST). Asymmetric dimethylarginine occurs at positions 1994 and 2015. Low complexity-rich tracts occupy residues 2115–2125 (QHQQQQQQQAA), 2133–2149 (SQPQ…QQQQ), and 2158–2171 (LQQQ…QPST). 2 disordered regions span residues 2115 to 2149 (QHQQ…QQQQ) and 2158 to 2177 (LQQQ…FGRY).

It belongs to the Mediator complex subunit 12 family. Component of the Mediator complex, which is composed of MED1, MED4, MED6, MED7, MED8, MED9, MED10, MED11, MED12, MED13, MED13L, MED14, MED15, MED16, MED17, MED18, MED19, MED20, MED21, MED22, MED23, MED24, MED25, MED26, MED27, MED29, MED30, MED31, CCNC, CDK8 and CDC2L6/CDK11. The MED12, MED13, CCNC and CDK8 subunits form a distinct module termed the CDK8 module. Mediator containing the CDK8 module is less active than Mediator lacking this module in supporting transcriptional activation. Individual preparations of the Mediator complex lacking one or more distinct subunits have been variously termed ARC, CRSP, DRIP, PC2, SMCC and TRAP. Also interacts with CTNNB1 and GLI3. Ubiquitous.

It localises to the nucleus. Component of the Mediator complex, a coactivator involved in the regulated transcription of nearly all RNA polymerase II-dependent genes. Mediator functions as a bridge to convey information from gene-specific regulatory proteins to the basal RNA polymerase II transcription machinery. Mediator is recruited to promoters by direct interactions with regulatory proteins and serves as a scaffold for the assembly of a functional pre-initiation complex with RNA polymerase II and the general transcription factors. This subunit may specifically regulate transcription of targets of the Wnt signaling pathway and SHH signaling pathway. The sequence is that of Mediator of RNA polymerase II transcription subunit 12 (MED12) from Homo sapiens (Human).